The sequence spans 86 residues: Cytochrome c-555 (86 aa).

The heme c site is built by Cys-14, Cys-17, His-18, and Met-60.

In terms of processing, binds 1 heme c group covalently per subunit.

Its function is as follows. This basic c-type monoheme cytochrome has been found exclusively in the green photosynthetic bacteria, although its role in bacterial photosynthesis is not established. It has an unusually low redox potential compared with mitochondrial cytochrome c. It is reactive with cytochrome c oxidases but not with reductases. The polypeptide is Cytochrome c-555 (Chlorobaculum thiosulfatiphilum (Chlorobium limicola f.sp. thiosulfatophilum)).